The chain runs to 388 residues: Xylose isomerase (388 aa).

Catalysis depends on residues histidine 54 and aspartate 57. Residues glutamate 181, glutamate 217, histidine 220, aspartate 245, aspartate 255, aspartate 257, and aspartate 287 each contribute to the Mg(2+) site.

Belongs to the xylose isomerase family. Homotetramer. The cofactor is Mg(2+).

It is found in the cytoplasm. The catalysed reaction is alpha-D-xylose = alpha-D-xylulofuranose. In Streptomyces thermocyaneoviolaceus, this protein is Xylose isomerase.